The chain runs to 309 residues: Mitochondrial substrate carrier family protein ancA (309 aa).

Solcar repeat units lie at residues 10–102, 114–203, and 216–299; these read SSFV…YKKF, KFFI…AKGI, and ASWG…IQKL. The next 5 helical transmembrane spans lie at 12–41, 79–103, 113–133, 181–201, and 215–235; these read FVKD…LLLQ, LANV…KKFF, TKFF…SLLF, VSVG…DTAK, and WASW…SYPF. The ADP site is built by arginine 84 and lysine 96. Arginine 239 is a binding site for ADP. The tract at residues 239 to 244 is important for transport activity; the sequence is RRRMMM. The short motif at 239-244 is the Nucleotide carrier signature motif element; the sequence is RRRMMM. A helical membrane pass occupies residues 276–293; sequence ALSNAIRGSGGALVLVIY.

Belongs to the mitochondrial carrier (TC 2.A.29) family. As to quaternary structure, monomer.

The protein resides in the mitochondrion inner membrane. The enzyme catalyses ADP(in) + ATP(out) = ADP(out) + ATP(in). Its activity is regulated as follows. The matrix-open state (m-state) is inhibited by the membrane-permeable bongkrekic acid (BKA). The cytoplasmic-open state (c-state) is inhibited by the membrane-impermeable toxic inhibitor carboxyatractyloside (CATR). Its function is as follows. ADP:ATP antiporter that mediates import of ADP into the mitochondrial matrix for ATP synthesis, and export of ATP out to fuel the cell. Cycles between the cytoplasmic-open state (c-state) and the matrix-open state (m-state): operates by the alternating access mechanism with a single substrate-binding site intermittently exposed to either the cytosolic (c-state) or matrix (m-state) side of the inner mitochondrial membrane. The polypeptide is Mitochondrial substrate carrier family protein ancA (ancA) (Dictyostelium discoideum (Social amoeba)).